Here is a 166-residue protein sequence, read N- to C-terminus: Small ribosomal subunit protein uS5 (166 aa).

The 64-residue stretch at 12–75 (YIEKLVQVNR…EAARRNMIQV (64 aa)) folds into the S5 DRBM domain.

This sequence belongs to the universal ribosomal protein uS5 family. Part of the 30S ribosomal subunit. Contacts proteins S4 and S8.

Its function is as follows. With S4 and S12 plays an important role in translational accuracy. In terms of biological role, located at the back of the 30S subunit body where it stabilizes the conformation of the head with respect to the body. The polypeptide is Small ribosomal subunit protein uS5 (Pseudomonas aeruginosa (strain LESB58)).